Consider the following 1395-residue polypeptide: MYPICTVVVDGLPSESSSSSYPGPVSVSEMSLLHALGPVQTWLGQELEKCGIDAMIYTRYVLSLLLHDSYDYDLQEQENDIFLGWEKGAYKKWGKSKKKCSDLTLEEMKKQAAVQCLRSASDESSGIETLVEELCSRLKDLQSKQEEKIHKKLEGSPSPEAELSPPAKDQVEMYYEAFPPLSEKPVCLQEIMTVWNKSKVCSYSSSSSSSTAPPASTDTSSPKDCNSESEVTKERSSEVPTTVHEKTQSKSKNEKENKFSNGTIEEKPALYKKQIRHKPEGKIRPRSWSSGSSEAGSSSSGNQGELKASMKYVKVRHKAREIRNKKGRNGQSRLSLKHGEKAERNIHTGSSSSSSSGSVKQLCKRGKRPLKEIGRKDPGSTEGKDLYMENRKDTEYKEEPLWYTEPIAEYFVPLSRKSKLETTYRNRQDTSDLTSEAVEELSESVHGLCISNNNLHKTYLAAGTFIDGHFVEMPAVINEDIDLTGTSLCSLPEDNKYLDDIHLSELTHFYEVDIDQSMLDPGASETMQGESRILNMIRQKSKENTDFEAECCIVLDGMELQGERAIWTDSTSSVGAEGLFLQDLGNLAQFWECCSSSSGDADGESFGGDSPVRLSPILDSTVLNSHLLAGNQELFSDINEGSGINSCFSVFEVQCSNSVLPFSFETLNLGNENTDSSANMLGKTQSRLLIWTKNSAFEENEHCSNLSTRTCSPWSHSEETRSDNETLNIQFEESTQFNAEDINYVVPRVSSNYVDEELLDFLQDETCQQNSRTLGEIPTLVFKKTSKLESVCGIQLEQKTENKNFETTQVCNESPHGDGYSSGVIKDIWTKMADTNSVATVEIERTDAELFSADVNNYCCCLDAEAELETLQEPDKAVRRSEYHLWEGQKESLEKRAFASSELSNVDGGDYTTPSKPWDVAQDKENTFILGGVYGELKTFNSDGEWAVVPPSHTKGSLLQCAASDVVTIAGTDVFMTPGNSFAPGHRQLWKPFVSFEQNDQPKSGENGLNKGFSFIFHEDLLGACGNFQVEDPGLEYSFSSFDLSNPFSQVLHVECSFEPEGIASFSPSFKPKSILCSDSDSEVFHPRICGVDRTQYRAIRISPRTHFRPISASELSPGGGSESEFESEKDEANIPIPSQVDIFEDPQADLKPLEEDAEKEGHYYGKSELESGKFLPRLKKSGMEKSAQTSLDSQEESTGILSVGKQNQCLECSMNESLEIDLESSEANCKIMAQCEEEINNFCGCKAGCQFPAYEDNPVSSGQLEEFPVLNTDIQGMNRSQEKQTWWEKALYSPLFPASECEECYTNAKGESGLEEYPDAKETPSNEERLLDFNRVSSVYEARCTGERDSGAKSDGFRGKMCSSASSTSEETGSEGGGEWVGPSEEELFSRTHL.

89-96 (AYKKWGKS) contributes to the ATP binding site. 2 disordered regions span residues 146 to 166 (EEKIHKKLEGSPSPEAELSPP) and 205 to 391 (SSSS…MENR). 2 stretches are compositionally biased toward low complexity: residues 155–166 (GSPSPEAELSPP) and 205–222 (SSSSSSTAPPASTDTSSP). Positions 230–269 (EVTKERSSEVPTTVHEKTQSKSKNEKENKFSNGTIEEKPA) are enriched in basic and acidic residues. Residues 287–301 (SWSSGSSEAGSSSSG) are compositionally biased toward low complexity. Over residues 313–328 (VKVRHKAREIRNKKGR) the composition is skewed to basic residues. The span at 337–346 (KHGEKAERNI) shows a compositional bias: basic and acidic residues. Residues 349–358 (GSSSSSSSGS) show a composition bias toward low complexity. The segment covering 369–391 (PLKEIGRKDPGSTEGKDLYMENR) has biased composition (basic and acidic residues). 2 positions are modified to phosphoserine: Ser-814 and Ser-1080. Residues 1110–1132 (PISASELSPGGGSESEFESEKDE) form a disordered region. Residues Ser-1194 and Ser-1338 each carry the phosphoserine modification. A compositionally biased stretch (basic and acidic residues) spans 1346 to 1359 (TGERDSGAKSDGFR). Residues 1346-1395 (TGERDSGAKSDGFRGKMCSSASSTSEETGSEGGGEWVGPSEEELFSRTHL) form a disordered region.

This is an uncharacterized protein from Homo sapiens (Human).